We begin with the raw amino-acid sequence, 1359 residues long: NPC1-like intracellular cholesterol transporter 1 (1359 aa).

The N-terminal stretch at 1–21 (MAEAGLRGWLLWALLLRLAQS) is a signal peptide. Residues 22 to 284 (EPYTTIHQPG…TFYLGQMPGS (263 aa)) are Extracellular-facing. Disulfide bonds link Cys-33–Cys-90, Cys-39–Cys-57, Cys-78–Cys-125, Cys-91–Cys-129, Cys-113–Cys-254, Cys-116–Cys-172, Cys-189–Cys-197, Cys-243–Cys-259, and Cys-256–Cys-263. Asn-54 is a glycosylation site (N-linked (GlcNAc...) asparagine). N-linked (GlcNAc...) asparagine glycans are attached at residues Asn-132 and Asn-138. Asn-244 carries N-linked (GlcNAc...) asparagine glycosylation. A helical transmembrane segment spans residues 285–305 (LVLIIILCSVFAVVTILLVGF). Residues 306-351 (RVAPARDKSKMVDPKKGTSLSDKLSFSTHTLLGQFFQGWGTWVASW) are Cytoplasmic-facing. Residues 352 to 372 (PLTILVLSVIPVVALAAGLVF) traverse the membrane as a helical segment. Over 373–632 (TELTTDPVEL…DEINRTTAED (260 aa)) the chain is Extracellular. Residues Asn-416, Asn-431, Asn-464, Asn-479, Asn-497, and Asn-506 are each glycosylated (N-linked (GlcNAc...) asparagine). Cys-471 and Cys-485 form a disulfide bridge. Cys-525 and Cys-542 are joined by a disulfide. The N-linked (GlcNAc...) asparagine glycan is linked to Asn-626. The SSD domain maps to 632–797 (DLPIFATSYI…MSAFVALLSL (166 aa)). A helical transmembrane segment spans residues 633–653 (LPIFATSYIVIFLYISLALGS). The Cytoplasmic portion of the chain corresponds to 654-666 (YSSWSRVMVDSKA). The helical transmembrane segment at 667-687 (TLGLGGVAVVLGAVMAAMGFF) threads the bilayer. Residues 688–696 (SYLGIRSSL) lie on the Extracellular side of the membrane. A helical membrane pass occupies residues 697–717 (VILQVVPFLVLSVGADNIFIF). Topologically, residues 718–742 (VLEYQRLPRRPGEPREVHIGRALGR) are cytoplasmic. The helical transmembrane segment at 743–763 (VAPSMLLCSLSEAICFFLGAL) threads the bilayer. Residues 764 to 776 (TPMPAVRTFALTS) lie on the Extracellular side of the membrane. Residues 777 to 797 (GLAVILDFLLQMSAFVALLSL) traverse the membrane as a helical segment. Residues 798 to 846 (DSKRQEASRLDVCCCVKPQELPPPGQGEGLLLGFFQKAYAPFLLHWITR) lie on the Cytoplasmic side of the membrane. The chain crosses the membrane as a helical span at residues 847 to 867 (GVVLLLFLALFGVSLYSMCHI). Topologically, residues 868–1139 (SVGLDQELAL…EQYLTILPEG (272 aa)) are extracellular. Intrachain disulfides connect Cys-920–Cys-925, Cys-966–Cys-1024, and Cys-980–Cys-989. A helical transmembrane segment spans residues 1140-1160 (LFMLSLCLVPTFAVSCLLLGL). The Cytoplasmic portion of the chain corresponds to 1161–1168 (DLRSGLLN). The chain crosses the membrane as a helical span at residues 1169 to 1189 (LLSIVMILVDTVGFMALWGIS). Residues 1190-1191 (YN) are Extracellular-facing. Residues 1192 to 1212 (AVSLINLVSAVGMSVEFVSHI) form a helical membrane-spanning segment. Over 1213–1236 (TRSFAISTKPTWLERAKEATISMG) the chain is Cytoplasmic. A helical transmembrane segment spans residues 1237–1257 (SAVFAGVAMTNLPGILVLGLA). Residues 1258 to 1268 (KAQLIQIFFFR) are Extracellular-facing. Residues 1269-1289 (LNLLITLLGLLHGLVFLPVIL) form a helical membrane-spanning segment. Residues 1290–1359 (SYVGPDVNPA…NFLPNNGRQF (70 aa)) lie on the Cytoplasmic side of the membrane.

This sequence belongs to the patched family. In terms of assembly, interacts with RAB11A, MYO5B and RAB11FIP2. Interaction with RAB11A, MYO5B and RAB11FIP2 is required for proper transport to the plasma membrane upon cholesterol depletion. Interacts with NPC2. Interacts with LIMA1. Highly glycosylated. Widely expressed. Expressed in liver. Also expressed in small intestine, pancreas, kidney, lung, pancreas, spleen, heart, gall bladder, brain, testis, stomach and muscle.

Its subcellular location is the apical cell membrane. It is found in the cell membrane. The protein resides in the cytoplasmic vesicle membrane. The catalysed reaction is cholesterol(in) = cholesterol(out). It catalyses the reaction sitosterol(out) = sitosterol(in). Its function is as follows. Plays a major role in cholesterol homeostasis. Critical for the uptake of cholesterol across the plasma membrane of the intestinal enterocyte. Involved in plant sterol absorption, it transports sitosterol, although at lower rates than cholesterol. Is the direct molecular target of ezetimibe, a drug that inhibits cholesterol absorption and is approved for the treatment of hypercholesterolemia. May have a function in the transport of multiple lipids and their homeostasis, thereby influencing lipid metabolism regulation. May be involved in caveolin trafficking from the plasma membrane. In addition, acts as a negative regulator of NPC2 and down-regulates its expression and secretion by inhibiting its maturation and accelerating its degradation. The protein is NPC1-like intracellular cholesterol transporter 1 of Homo sapiens (Human).